Consider the following 514-residue polypeptide: Probable type III restriction-modification enzyme HindVIP Res subunit (514 aa).

It belongs to the type III restriction-modification system Res protein family. Contains two different subunits: Res and Mod. Requires Mg(2+) as cofactor. S-adenosyl-L-methionine is required as a cofactor.

It catalyses the reaction Endonucleolytic cleavage of DNA to give specific double-stranded fragments with terminal 5'-phosphates.. Its function is as follows. A type III restriction enzyme that recognizes 2 inversely oriented double-stranded sequences 5'-CGAAT-3' and cleaves 25-27 base pairs downstream. After binding to one recognition site undergoes random one-dimensional diffusion along DNA until it collides with a stationary enzyme bound to the second DNA site, which is when DNA cleavage occurs. DNA restriction requires both the Res and Mod subunits. In Haemophilus influenzae (strain ATCC 51907 / DSM 11121 / KW20 / Rd), this protein is Probable type III restriction-modification enzyme HindVIP Res subunit.